The chain runs to 273 residues: Protein GMH1 (273 aa).

Positions 1 to 33 (MSYLPTYSNDLPAGPQGQRRRNNGNENDARQGY) are disordered. Serine 2 carries the post-translational modification N-acetylserine. The Cytoplasmic portion of the chain corresponds to 2 to 89 (SYLPTYSNDL…QTKNQWARDD (88 aa)). A helical membrane pass occupies residues 90 to 110 (PSFFIFQIALISLSSIIWSIY). Residues 111–134 (NSGFNNDSDMGALSIIGHFFKSLV) are Lumenal-facing. The helical transmembrane segment at 135 to 155 (MMVILDFFIFGFIMATIFYLL) threads the bilayer. Residues 156–175 (LNRSHFKFKSSQNSVVEWAY) lie on the Cytoplasmic side of the membrane. The chain crosses the membrane as a helical span at residues 176–196 (CFDVHCNSFLIILLCLYFIQF). The Lumenal segment spans residues 197–216 (LLLPIINLQNWISLLIGNSL). A helical membrane pass occupies residues 217–237 (YCFAIGHYFILTFYGYNQLPF). The Cytoplasmic portion of the chain corresponds to 238 to 242 (LKNLN). Residues 243–263 (FILLPTLGLSIIYLISLFGID) form a helical membrane-spanning segment. The Lumenal portion of the chain corresponds to 264-273 (LSKKLSFYNY).

The protein belongs to the unc-50 family. In terms of assembly, interacts with GEA1 and GEA2.

It is found in the golgi apparatus membrane. It localises to the endoplasmic reticulum membrane. The protein is Protein GMH1 (GMH1) of Saccharomyces cerevisiae (strain ATCC 204508 / S288c) (Baker's yeast).